The chain runs to 438 residues: Dolichyl-diphosphooligosaccharide--protein glycosyltransferase 48 kDa subunit (438 aa).

An N-terminal signal peptide occupies residues 1-25 (MASLRLSVLLVSVSWLLLLVSGLRA). Topologically, residues 26-408 (GPRTLVLMEN…QYERFIPSAY (383 aa)) are lumenal. Residues 409-429 (PYYASAFSVMFGLFIFSIVFL) form a helical membrane-spanning segment. Residues 430-438 (HMKEKEKSD) lie on the Cytoplasmic side of the membrane.

It belongs to the DDOST 48 kDa subunit family. As to quaternary structure, component of the oligosaccharyltransferase (OST) complex.

It is found in the endoplasmic reticulum membrane. It functions in the pathway protein modification; protein glycosylation. Its function is as follows. Subunit of the oligosaccharyl transferase (OST) complex that catalyzes the initial transfer of a defined glycan (Glc(3)Man(9)GlcNAc(2) in eukaryotes) from the lipid carrier dolichol-pyrophosphate to an asparagine residue within an Asn-X-Ser/Thr consensus motif in nascent polypeptide chains, the first step in protein N-glycosylation. N-glycosylation occurs cotranslationally and the complex associates with the Sec61 complex at the channel-forming translocon complex that mediates protein translocation across the endoplasmic reticulum (ER). All subunits are required for a maximal enzyme activity. Required for the assembly of both SST3A- and SS3B-containing OST complexes. The sequence is that of Dolichyl-diphosphooligosaccharide--protein glycosyltransferase 48 kDa subunit from Xenopus laevis (African clawed frog).